Reading from the N-terminus, the 250-residue chain is DNA repair protein RecO (250 aa).

The protein belongs to the RecO family.

Involved in DNA repair and RecF pathway recombination. This is DNA repair protein RecO from Staphylococcus aureus (strain Mu3 / ATCC 700698).